The primary structure comprises 305 residues: Type II restriction enzyme SsoII (305 aa).

The catalysed reaction is Endonucleolytic cleavage of DNA to give specific double-stranded fragments with terminal 5'-phosphates.. A P subtype restriction enzyme that recognizes the double-stranded sequence 5'-CCNGG-3' and cleaves before C-1. This is Type II restriction enzyme SsoII (ssoIIR) from Shigella sonnei.